Here is a 284-residue protein sequence, read N- to C-terminus: 2-dehydro-3-deoxyphosphooctonate aldolase (284 aa).

The protein belongs to the KdsA family.

The protein resides in the cytoplasm. The catalysed reaction is D-arabinose 5-phosphate + phosphoenolpyruvate + H2O = 3-deoxy-alpha-D-manno-2-octulosonate-8-phosphate + phosphate. The protein operates within carbohydrate biosynthesis; 3-deoxy-D-manno-octulosonate biosynthesis; 3-deoxy-D-manno-octulosonate from D-ribulose 5-phosphate: step 2/3. It participates in bacterial outer membrane biogenesis; lipopolysaccharide biosynthesis. This chain is 2-dehydro-3-deoxyphosphooctonate aldolase, found in Erwinia tasmaniensis (strain DSM 17950 / CFBP 7177 / CIP 109463 / NCPPB 4357 / Et1/99).